A 187-amino-acid polypeptide reads, in one-letter code: Ribosome-recycling factor (187 aa).

It belongs to the RRF family.

The protein resides in the cytoplasm. In terms of biological role, responsible for the release of ribosomes from messenger RNA at the termination of protein biosynthesis. May increase the efficiency of translation by recycling ribosomes from one round of translation to another. This Anaeromyxobacter sp. (strain Fw109-5) protein is Ribosome-recycling factor.